The sequence spans 161 residues: Photosystem II extrinsic protein V (161 aa).

The signal sequence occupies residues methionine 1 to alanine 25. The heme c site is built by cysteine 61, cysteine 64, histidine 65, and histidine 116.

It belongs to the cytochrome c family. PsbV subfamily. In terms of assembly, PSII is composed of 1 copy each of membrane proteins PsbA, PsbB, PsbC, PsbD, PsbE, PsbF, PsbH, PsbI, PsbJ, PsbK, PsbL, PsbM, PsbT, PsbX, PsbY, PsbZ, Psb30/Ycf12, peripheral proteins PsbO, CyanoQ (PsbQ), PsbU, PsbV and a large number of cofactors. It forms dimeric complexes. Heme c is required as a cofactor.

The protein localises to the cellular thylakoid membrane. Its function is as follows. One of the extrinsic, lumenal subunits of photosystem II (PSII). PSII is a light-driven water plastoquinone oxidoreductase, using light energy to abstract electrons from H(2)O, generating a proton gradient subsequently used for ATP formation. The extrinsic proteins stabilize the structure of photosystem II oxygen-evolving complex (OEC), the ion environment of oxygen evolution and protect the OEC against heat-induced inactivation. Low-potential cytochrome c that plays a role in the OEC of PSII. The chain is Photosystem II extrinsic protein V from Trichodesmium erythraeum (strain IMS101).